The primary structure comprises 499 residues: Maturase K (499 aa).

This sequence belongs to the intron maturase 2 family. MatK subfamily.

Its subcellular location is the plastid. The protein localises to the chloroplast. In terms of biological role, usually encoded in the trnK tRNA gene intron. Probably assists in splicing its own and other chloroplast group II introns. This is Maturase K from Batis maritima (Maritime saltwort).